Here is a 292-residue protein sequence, read N- to C-terminus: Non-homologous end joining protein Ku (292 aa).

The Ku domain maps to 12–196 (KLSLVTCPVV…KITKDMVELA (185 aa)). Residues 231–292 (KPIKLPEPEE…RSAARQRKAG (62 aa)) are disordered. Positions 271-292 (APAHRRPAKKAHRSAARQRKAG) are enriched in basic residues.

This sequence belongs to the prokaryotic Ku family. Homodimer. Interacts with LigD.

Functionally, with LigD forms a non-homologous end joining (NHEJ) DNA repair enzyme, which repairs dsDNA breaks with reduced fidelity. Binds linear dsDNA with 5'- and 3'- overhangs but not closed circular dsDNA nor ssDNA. Recruits and stimulates the ligase activity of LigD. The protein is Non-homologous end joining protein Ku of Bradyrhizobium sp. (strain ORS 278).